A 435-amino-acid chain; its full sequence is Tol-Pal system protein TolB (435 aa).

The first 28 residues, 1 to 28 (MTKCSFFRAILVAVGLMTAAVFATPANA), serve as a signal peptide directing secretion. Residues 288–310 (STAAIDTSPSYSPDGARVSFESD) are disordered.

This sequence belongs to the TolB family. The Tol-Pal system is composed of five core proteins: the inner membrane proteins TolA, TolQ and TolR, the periplasmic protein TolB and the outer membrane protein Pal. They form a network linking the inner and outer membranes and the peptidoglycan layer.

The protein resides in the periplasm. Functionally, part of the Tol-Pal system, which plays a role in outer membrane invagination during cell division and is important for maintaining outer membrane integrity. The chain is Tol-Pal system protein TolB from Rhizobium johnstonii (strain DSM 114642 / LMG 32736 / 3841) (Rhizobium leguminosarum bv. viciae).